The primary structure comprises 670 residues: Polar flagellar hook-associated protein 2 (670 aa).

The disordered stretch occupies residues 226-300 (PLQAPQQPDQ…RSSLRPEERI (75 aa)). Acidic residues predominate over residues 257-266 (AQDDAQDDAS). Low complexity predominate over residues 272-283 (AAGAEAAKAGQE). A compositionally biased stretch (basic and acidic residues) spans 284–300 (AIDKANQRSSLRPEERI). The stretch at 342-428 (GTLTDSYVTT…AQSSFEEYLG (87 aa)) forms a coiled coil.

It belongs to the FliD family. Homopentamer.

It localises to the secreted. It is found in the bacterial flagellum. Functionally, required for the morphogenesis and for the elongation of the flagellar filament by facilitating polymerization of the flagellin monomers at the tip of growing filament. Forms a capping structure, which prevents flagellin subunits (transported through the central channel of the flagellum) from leaking out without polymerization at the distal end. Important for swimming motility. In Vibrio parahaemolyticus serotype O3:K6 (strain RIMD 2210633), this protein is Polar flagellar hook-associated protein 2 (fliDP).